Here is a 309-residue protein sequence, read N- to C-terminus: MSIRIIPQDELGSSEKRTADYIPPLLFPRLKNLYNRRAERLRELAENNPLGDFLRFAALIAHAQEVVLYDHPLQIDLTARIKEANDQGKPPLDIHVLPRDKHWHTLLQSLIAELKPEMSGPALAVIENLEKASALELEEMASALFAADFALVSSDKAPFIWAALSLYWAQMASLIPGKARAEYGEARQFCPVCGSMPVTSMVQIGTTQGLRYLHCNLCETEWHVVRIKCSNCEQTRDLNYWSLENENAAVKAESCGDCGTYLKILYQEKDPKVEAVADDLATLVLDAHMEQEGFARSSINPFLFPGEGE.

Belongs to the FdhE family.

It is found in the cytoplasm. Its function is as follows. Necessary for formate dehydrogenase activity. This chain is Protein FdhE homolog, found in Enterobacter sp. (strain 638).